A 220-amino-acid chain; its full sequence is Splicing factor U2AF 26 kDa subunit (220 aa).

Residue A2 is modified to N-acetylalanine. A C3H1-type 1 zinc finger spans residues 12–40 (EKDKVNCSFYFKIGACRHGDRCSRLHNKP). The RRM domain maps to 65-147 (SHCHVSDVEV…QAVHAELSPV (83 aa)). A C3H1-type 2 zinc finger spans residues 149 to 176 (DFRESCCRQYEMGECTRGGFCNFMHLRP). The interval 186 to 220 (YGRGPRRRSPPRSHTGHRPRERNRRRSPDHRHGRF) is disordered. Positions 189–220 (GPRRRSPPRSHTGHRPRERNRRRSPDHRHGRF) are enriched in basic residues.

The protein belongs to the splicing factor SR family. As to quaternary structure, interacts with GFI1, U2AF2 and C1QBP.

It localises to the nucleus. Its subcellular location is the nucleus speckle. The protein resides in the cytoplasm. In terms of biological role, RNA-binding protein that function as a pre-mRNA splicing factor. Plays a critical role in both constitutive and enhancer-dependent splicing by mediating protein-protein interactions and protein-RNA interactions required for accurate 3'-splice site selection. Acts by enhancing the binding of U2AF2 to weak pyrimidine tracts. Also participates in the regulation of alternative pre-mRNA splicing. Activates exon 5 skipping of PTPRC during T-cell activation; an event reversed by GFI1. Binds to RNA at the AG dinucleotide at the 3'-splice site. Shows a preference for AGC or AGA. This chain is Splicing factor U2AF 26 kDa subunit (U2AF1L4), found in Bos taurus (Bovine).